The sequence spans 209 residues: Octanoyltransferase (209 aa).

A BPL/LPL catalytic domain is found at 30–209; sequence VNEPEIVYLV…IQTEFNKIFT (180 aa). Substrate is bound by residues 69 to 76, 143 to 145, and 156 to 158; these read RGGKFTFH, AIG, and GVA. The active-site Acyl-thioester intermediate is the Cys-174.

The protein belongs to the LipB family.

It is found in the cytoplasm. It carries out the reaction octanoyl-[ACP] + L-lysyl-[protein] = N(6)-octanoyl-L-lysyl-[protein] + holo-[ACP] + H(+). It participates in protein modification; protein lipoylation via endogenous pathway; protein N(6)-(lipoyl)lysine from octanoyl-[acyl-carrier-protein]: step 1/2. Functionally, catalyzes the transfer of endogenously produced octanoic acid from octanoyl-acyl-carrier-protein onto the lipoyl domains of lipoate-dependent enzymes. Lipoyl-ACP can also act as a substrate although octanoyl-ACP is likely to be the physiological substrate. The chain is Octanoyltransferase from Rickettsia canadensis (strain McKiel).